A 434-amino-acid chain; its full sequence is Putative ankyrin repeat protein FPV219 (434 aa).

7 ANK repeats span residues D33–L62, E66–C95, H101–Y131, T132–T161, L165–S195, L196–A225, and E229–I258.

In Fowlpox virus (strain NVSL) (FPV), this protein is Putative ankyrin repeat protein FPV219.